Here is a 914-residue protein sequence, read N- to C-terminus: Zinc finger protein 717 (914 aa).

The 72-residue stretch at 22-93 (VSFEEVAVHF…EETPNLRLSA (72 aa)) folds into the KRAB domain. The segment at 209–231 (FQCNEQGKTFNTEAMFFIHKRVH) adopts a C2H2-type 1; degenerate zinc-finger fold. The C2H2-type 2; degenerate zinc finger occupies 266 to 277 (RKSDFTKHQQTH). The C2H2-type 3; degenerate zinc-finger motif lies at 283-305 (YECVECEKPSISKSDLMLQCKMP). 12 consecutive C2H2-type zinc fingers follow at residues 311–333 (YACN…QRIH), 339–361 (YGCN…ERTH), 367–389 (YKCI…HRTH), 395–417 (YQCS…HRTH), 423–445 (YACD…QRTH), 451–473 (YECN…QRTH), 479–501 (YECN…QWTH), 507–529 (YECN…QRTH), 535–557 (YACN…HRTH), 563–585 (YECN…QRTH), 591–613 (YECN…KRTH), and 619–641 (YECN…QGTH). Residues 649-669 (CNECGKTFHRKSFLTIHQRTH) form a C2H2-type 16; degenerate zinc finger. Residues 741–752 (QKSVLTVHHRTH) form a C2H2-type 17; degenerate zinc finger. C2H2-type zinc fingers lie at residues 758 to 780 (YECN…QGTH), 786 to 808 (YECD…QRTH), 814 to 836 (FECK…HRTH), 842 to 864 (FRCN…QRTH), and 870 to 892 (YECK…QQTH).

It belongs to the krueppel C2H2-type zinc-finger protein family.

Its subcellular location is the nucleus. May be involved in transcriptional regulation. This is Zinc finger protein 717 from Homo sapiens (Human).